The chain runs to 108 residues: Abdominal ganglion neuropeptide R3-14 (108 aa).

An N-terminal signal peptide occupies residues 1-23 (MQVLHLCLAVSIAVALLSQAAWS). Residues E24 and E52 each carry the pyrrolidone carboxylic acid (Glu); partial modification. Q66 bears the Pyrrolidone carboxylic acid mark.

In terms of processing, the partial formation of pyroglutamate from N-terminal glutamic acid in peptides isolated from single cells is detected by mass spectrometry. There are indications this modification depends on a heat sensitive factor. As to expression, neurons R3-R14. A cluster of 12 giant neurons located on the right side of the abdominal ganglion.

It localises to the secreted. In terms of biological role, HRBP is a myoactive peptide that excites Aplysia heart and enhances gut motility in vitro. The chain is Abdominal ganglion neuropeptide R3-14 from Aplysia californica (California sea hare).